The following is a 142-amino-acid chain: Alpha-lactalbumin (142 aa).

The first 19 residues, 1 to 19 (MMSFVSLLLVGILFHATQA), serve as a signal peptide directing secretion. A C-type lysozyme domain is found at 20–142 (EQLTKCEVFQ…KLDQWLCEKL (123 aa)). 4 cysteine pairs are disulfide-bonded: cysteine 25-cysteine 139, cysteine 47-cysteine 130, cysteine 80-cysteine 96, and cysteine 92-cysteine 110. 2 N-linked (GlcNAc...) asparagine glycosylation sites follow: asparagine 64 and asparagine 93. Ca(2+) is bound by residues lysine 98, aspartate 101, aspartate 103, aspartate 106, and aspartate 107.

Belongs to the glycosyl hydrolase 22 family. Lactose synthase (LS) is a heterodimer of a catalytic component, beta1,4-galactosyltransferase (beta4Gal-T1) and a regulatory component, alpha-lactalbumin (LA). Mammary gland specific. Secreted in milk.

The protein localises to the secreted. In terms of biological role, regulatory subunit of lactose synthase, changes the substrate specificity of galactosyltransferase in the mammary gland making glucose a good acceptor substrate for this enzyme. This enables LS to synthesize lactose, the major carbohydrate component of milk. In other tissues, galactosyltransferase transfers galactose onto the N-acetylglucosamine of the oligosaccharide chains in glycoproteins. This Capra hircus (Goat) protein is Alpha-lactalbumin (LALBA).